Reading from the N-terminus, the 282-residue chain is U1 small nuclear ribonucleoprotein A (282 aa).

Position 2 is an N-acetylalanine (Ala-2). Positions 10–89 (HTIYINNLNE…KPMRIQYAKT (80 aa)) constitute an RRM 1 domain. Lys-60 is subject to N6-acetyllysine. Residues 101–141 (FVERDRKREKRKPKSQETPAAKKAVQGGAAAPVVGTVQGPV) form a disordered region. Positions 119-141 (PAAKKAVQGGAAAPVVGTVQGPV) are enriched in low complexity. Arg-152 bears the Omega-N-methylarginine mark. The 75-residue stretch at 208–282 (HILFLTNLPE…NAMKISFAKK (75 aa)) folds into the RRM 2 domain.

Belongs to the RRM U1 A/B'' family. U1 snRNP is composed of the 7 core Sm proteins SNRPB, SNRPD1, SNRPD2, SNRPD3, SNRPE, SNRPF and SNRPG that assemble in a heptameric protein ring on the Sm site of the small nuclear RNA to form the core snRNP, and at least three U1 snRNP-specific proteins SNRNP70/U1-70K, SNRPA/U1-A and SNRPC/U1-C. Interacts with SFPQ; component of a snRNP-free complex with SFPQ.

The protein localises to the nucleus. Functionally, component of the spliceosomal U1 snRNP, which is essential for recognition of the pre-mRNA 5' splice-site and the subsequent assembly of the spliceosome. U1 snRNP is the first snRNP to interact with pre-mRNA. This interaction is required for the subsequent binding of U2 snRNP and the U4/U6/U5 tri-snRNP. SNRPA binds stem loop II of U1 snRNA. In a snRNP-free form (SF-A) may be involved in coupled pre-mRNA splicing and polyadenylation process. May bind preferentially to the 5'-UGCAC-3' motif on RNAs. This chain is U1 small nuclear ribonucleoprotein A (SNRPA), found in Bos taurus (Bovine).